The sequence spans 953 residues: Translation initiation factor IF-2 (953 aa).

2 disordered regions span residues 51-242 and 279-363; these read SKAS…QEAK and TKLK…TERK. Basic and acidic residues-rich tracts occupy residues 80–89 and 98–111; these read TGSEHVEKTQ and FKAE…EQAA. The segment covering 131–140 has biased composition (polar residues); it reads QPNNHQTNEQ. Residues 149–188 are compositionally biased toward basic and acidic residues; sequence SQGDTNDKRIERKASNVSPRHDNHQLVGDRNRSFAKENHK. A compositionally biased stretch (polar residues) spans 191–207; sequence RFTNQKKQGRQEPQSKS. Over residues 229 to 242 the composition is skewed to basic and acidic residues; the sequence is RQSETRFRAQQEAK. The segment covering 282-291 has biased composition (polar residues); the sequence is KSSNISAKST. Over residues 300 to 317 the composition is skewed to basic and acidic residues; the sequence is ARPEKNRELTHHSQEGQK. The span at 322–338 shows a compositional bias: low complexity; sequence SWNSQNQVRNQKNSNWN. The segment covering 339–348 has biased composition (basic residues); the sequence is KNKKTKKGKN. The region spanning 454 to 623 is the tr-type G domain; it reads ERAPVVTIMG…LLVAEVEELK (170 aa). The segment at 463 to 470 is G1; sequence GHVDHGKT. 463–470 is a GTP binding site; sequence GHVDHGKT. The segment at 488–492 is G2; it reads GITQH. The interval 509–512 is G3; sequence DTPG. GTP contacts are provided by residues 509–513 and 563–566; these read DTPGH and NKID. The G4 stretch occupies residues 563 to 566; the sequence is NKID. The G5 stretch occupies residues 599–601; the sequence is SAK.

Belongs to the TRAFAC class translation factor GTPase superfamily. Classic translation factor GTPase family. IF-2 subfamily.

It localises to the cytoplasm. Its function is as follows. One of the essential components for the initiation of protein synthesis. Protects formylmethionyl-tRNA from spontaneous hydrolysis and promotes its binding to the 30S ribosomal subunits. Also involved in the hydrolysis of GTP during the formation of the 70S ribosomal complex. This chain is Translation initiation factor IF-2, found in Streptococcus pyogenes serotype M49 (strain NZ131).